We begin with the raw amino-acid sequence, 74 residues long: Putative defensin-like protein 12 (74 aa).

An N-terminal signal peptide occupies residues 1 to 26 (MAKPCAAFLVFLCLSMLILSIPDISC). Disulfide bonds link C26–C50, C33–C59, and C39–C61.

Belongs to the DEFL family.

The protein localises to the secreted. This is Putative defensin-like protein 12 from Arabidopsis thaliana (Mouse-ear cress).